The primary structure comprises 442 residues: Methylenetetrahydrofolate--tRNA-(uracil-5-)-methyltransferase TrmFO 1 (442 aa).

An FAD-binding site is contributed by 9–14 (GAGLAG).

Belongs to the MnmG family. TrmFO subfamily. Requires FAD as cofactor.

The protein resides in the cytoplasm. It carries out the reaction uridine(54) in tRNA + (6R)-5,10-methylene-5,6,7,8-tetrahydrofolate + NADH + H(+) = 5-methyluridine(54) in tRNA + (6S)-5,6,7,8-tetrahydrofolate + NAD(+). The enzyme catalyses uridine(54) in tRNA + (6R)-5,10-methylene-5,6,7,8-tetrahydrofolate + NADPH + H(+) = 5-methyluridine(54) in tRNA + (6S)-5,6,7,8-tetrahydrofolate + NADP(+). In terms of biological role, catalyzes the folate-dependent formation of 5-methyl-uridine at position 54 (M-5-U54) in all tRNAs. This Mesoplasma florum (strain ATCC 33453 / NBRC 100688 / NCTC 11704 / L1) (Acholeplasma florum) protein is Methylenetetrahydrofolate--tRNA-(uracil-5-)-methyltransferase TrmFO 1.